The following is a 192-amino-acid chain: NF-kappa-B inhibitor-interacting Ras-like protein 1 (192 aa).

GTP is bound at residue 11-18 (GLLSVGKT). Positions 35–43 (DCETMEDVY) match the Effector region motif. The interactions with NFKBIA and NFKBIB stretch occupies residues 58–93 (HLYDTRGLQEGVELPKHYFSFADGFVLVYSVNNLES). GTP is bound by residues 61-65 (DTRGL) and 120-123 (NKID). The tract at residues 168–192 (LSQPQSKSSFPLPGRKNKGNSNSEN) is disordered.

The protein belongs to the small GTPase superfamily. Ras family. KappaB-Ras subfamily. Interacts with both NF-kappa-B inhibitor alpha (NFKBIA) and beta (NFKBIB) in vitro. However, it probably only interacts with NFKBIB in vivo. Forms a complex with NFKBIB and NF-kappa-B heterodimer (p50/NFKB1 and p65/RELA). Also interacts with c-Rel (REL). As to expression, widely expressed.

Its subcellular location is the cytoplasm. Atypical Ras-like protein that acts as a potent regulator of NF-kappa-B activity by preventing the degradation of NF-kappa-B inhibitor beta (NFKBIB) by most signals, explaining why NFKBIB is more resistant to degradation. May act by blocking phosphorylation of NFKBIB and mediating cytoplasmic retention of p65/RELA NF-kappa-B subunit. It is unclear whether it acts as a GTPase. Both GTP- and GDP-bound forms block phosphorylation of NFKBIB. The protein is NF-kappa-B inhibitor-interacting Ras-like protein 1 (NKIRAS1) of Homo sapiens (Human).